A 299-amino-acid polypeptide reads, in one-letter code: UDP-N-acetylenolpyruvoylglucosamine reductase (299 aa).

The FAD-binding PCMH-type domain occupies Arg-21–Gly-189. Arg-168 is a catalytic residue. Catalysis depends on Ser-219, which acts as the Proton donor. Residue Glu-289 is part of the active site.

The protein belongs to the MurB family. The cofactor is FAD.

It is found in the cytoplasm. The enzyme catalyses UDP-N-acetyl-alpha-D-muramate + NADP(+) = UDP-N-acetyl-3-O-(1-carboxyvinyl)-alpha-D-glucosamine + NADPH + H(+). Its pathway is cell wall biogenesis; peptidoglycan biosynthesis. Cell wall formation. The polypeptide is UDP-N-acetylenolpyruvoylglucosamine reductase (Parasynechococcus marenigrum (strain WH8102)).